The primary structure comprises 301 residues: MAKPLSITSSLPTFSVTWRAYFEMTKPKVVALMLLTVLVGMCLAVPHAVPVQPLLAGMLGIAMMAGSAAALNHLIDRRIDGLMARTYNRPLPKGRISATRALIFAASLGSLGFIVLYSLVNPLTAWLTFASLIGYALVYTAYLKRATSQNIVIGGLAGAMPPLLGWTAVTNEFHGHALLLVIIIFTWTPPHFWALAIHRRAEYAKVDIPMLPVTHGVEFTKTCILLYTVLLAIACLLPVLVGMCGPVYFVCSSLLSTGFIYKAWQLKYRDHDGLAMQVFRFSIYHLMLLFMALLLDHYLWN.

9 consecutive transmembrane segments (helical) span residues 29 to 49 (VVALMLLTVLVGMCLAVPHAV), 51 to 71 (VQPLLAGMLGIAMMAGSAAAL), 101 to 121 (ALIFAASLGSLGFIVLYSLVN), 123 to 143 (LTAWLTFASLIGYALVYTAYL), 150 to 170 (NIVIGGLAGAMPPLLGWTAVT), 177 to 197 (ALLLVIIIFTWTPPHFWALAI), 223 to 243 (CILLYTVLLAIACLLPVLVGM), 244 to 264 (CGPVYFVCSSLLSTGFIYKAW), and 274 to 294 (LAMQVFRFSIYHLMLLFMALL).

This sequence belongs to the UbiA prenyltransferase family. Protoheme IX farnesyltransferase subfamily.

It localises to the cell inner membrane. The catalysed reaction is heme b + (2E,6E)-farnesyl diphosphate + H2O = Fe(II)-heme o + diphosphate. It participates in porphyrin-containing compound metabolism; heme O biosynthesis; heme O from protoheme: step 1/1. Functionally, converts heme B (protoheme IX) to heme O by substitution of the vinyl group on carbon 2 of heme B porphyrin ring with a hydroxyethyl farnesyl side group. This is Protoheme IX farnesyltransferase 1 from Shewanella baltica (strain OS195).